The sequence spans 163 residues: Choriogonadotropin subunit beta (163 aa).

A signal peptide spans 1–20 (MEMLQGLLLCLLLSTGGAWA). Cystine bridges form between Cys29/Cys76, Cys43/Cys91, Cys46/Cys129, Cys54/Cys107, Cys58/Cys109, and Cys112/Cys119. The N-linked (GlcNAc...) asparagine glycan is linked to Asn50. Asn124 carries N-linked (GlcNAc...) asparagine glycosylation. Positions 135-151 (QDSSSNVPPSNLTSPSQ) are enriched in polar residues. The disordered stretch occupies residues 135–163 (QDSSSNVPPSNLTSPSQLLEPAVTPLVPQ). Ser139 is a glycosylation site (O-linked (GalNAc...) serine). N-linked (GlcNAc...) asparagine glycosylation occurs at Asn145. An O-linked (GalNAc...) serine glycan is attached at Ser150.

This sequence belongs to the glycoprotein hormones subunit beta family. In terms of assembly, heterodimer of a common alpha chain and a unique beta chain which confers biological specificity to thyrotropin, lutropin, follitropin and gonadotropin.

The protein localises to the secreted. Functionally, stimulates the ovaries to synthesize the steroids that are essential for the maintenance of pregnancy. This is Choriogonadotropin subunit beta (CGB) from Saimiri boliviensis boliviensis (Bolivian squirrel monkey).